A 193-amino-acid polypeptide reads, in one-letter code: Transcriptional regulator RamR (193 aa).

Positions 7–66 (EDKKQALLEAATQAIAQSGIAASTAVIARNAGVAEGTLFRYFATKDELINTLYLHLKQDL) constitute an HTH tetR-type domain. A DNA-binding region (H-T-H motif) is located at residues 29–48 (STAVIARNAGVAEGTLFRYF).

In terms of assembly, homodimer. May bind DNA either as a homodimer or as a pair of homodimers. Various chemicals reduce DNA-binding in vitro, including bile acids, such as cholic and chenodeoxycholic acids, and antimicrobial drugs, such as berberine, crystal violet, dequalinium, ethidium bromide and rhodamine 6G. Binds small regulatory RNA StyR3.

Its function is as follows. Transcriptional regulator. Represses the transcription of the transcriptional activator RamA and, thereby, leads to repression of the expression of the efflux pump subunits AcrA and AcrB, and TolC. Acts by binding directly to the promoter region of the ramA gene. Promoter binding may be inhibited partially by the small regulatory RNA StyR3, perhaps thereby ensuring a basal level of expression of RamA. The sequence is that of Transcriptional regulator RamR from Salmonella typhimurium (strain LT2 / SGSC1412 / ATCC 700720).